We begin with the raw amino-acid sequence, 161 residues long: UPF0178 protein BruAb1_1955 (161 aa).

It belongs to the UPF0178 family.

The protein is UPF0178 protein BruAb1_1955 of Brucella abortus biovar 1 (strain 9-941).